Reading from the N-terminus, the 264-residue chain is [LysW]-aminoadipate/[LysW]-glutamate kinase (264 aa).

Residues 35–36 (GG), Arg-62, and Asn-167 contribute to the substrate site.

Belongs to the acetylglutamate kinase family. LysZ subfamily.

The protein resides in the cytoplasm. It catalyses the reaction [amino-group carrier protein]-C-terminal-N-(1,4-dicarboxybutan-1-yl)-L-glutamine + ATP = [amino-group carrier protein]-C-terminal-N-(1-carboxy-5-phosphooxy-5-oxopentan-1-yl)-L-glutamine + ADP. It carries out the reaction [amino-group carrier protein]-C-terminal-gamma-(L-glutamyl)-L-glutamate + ATP = [amino-group carrier protein]-C-terminal-gamma-(5-phospho-L-glutamyl)-L-glutamate + ADP. It functions in the pathway amino-acid biosynthesis; L-lysine biosynthesis via AAA pathway; L-lysine from L-alpha-aminoadipate (Thermus route): step 2/5. The protein operates within amino-acid biosynthesis; L-arginine biosynthesis. Its function is as follows. Involved in both the arginine and lysine biosynthetic pathways. Phosphorylates the LysW-bound precursors glutamate (for arginine biosynthesis), respectively alpha-aminoadipate (for lysine biosynthesis). The protein is [LysW]-aminoadipate/[LysW]-glutamate kinase of Saccharolobus islandicus (strain Y.N.15.51 / Yellowstone #2) (Sulfolobus islandicus).